The chain runs to 320 residues: ATP-dependent 6-phosphofructokinase (320 aa).

Gly-12 is an ATP binding site. Residues 22 to 26 (RGVVR) and 55 to 60 (RYSVSD) each bind ADP. Residues 73-74 (RF) and 103-106 (GDGS) contribute to the ATP site. Asp-104 is a binding site for Mg(2+). 126–128 (TID) provides a ligand contact to substrate. Asp-128 serves as the catalytic Proton acceptor. Residue Arg-155 coordinates ADP. Residues Arg-163 and 170–172 (MGR) contribute to the substrate site. ADP-binding positions include 186–188 (GCE), Lys-212, and 214–216 (KKH). Residues Glu-223, Arg-244, and 250–253 (HIQR) each bind substrate.

The protein belongs to the phosphofructokinase type A (PFKA) family. ATP-dependent PFK group I subfamily. Prokaryotic clade 'B1' sub-subfamily. Homotetramer. Mg(2+) is required as a cofactor.

It localises to the cytoplasm. The enzyme catalyses beta-D-fructose 6-phosphate + ATP = beta-D-fructose 1,6-bisphosphate + ADP + H(+). It participates in carbohydrate degradation; glycolysis; D-glyceraldehyde 3-phosphate and glycerone phosphate from D-glucose: step 3/4. With respect to regulation, allosterically activated by ADP and other diphosphonucleosides, and allosterically inhibited by phosphoenolpyruvate. In terms of biological role, catalyzes the phosphorylation of D-fructose 6-phosphate to fructose 1,6-bisphosphate by ATP, the first committing step of glycolysis. The protein is ATP-dependent 6-phosphofructokinase of Buchnera aphidicola subsp. Acyrthosiphon pisum (strain 5A).